We begin with the raw amino-acid sequence, 361 residues long: G-protein coupled receptor 183 (361 aa).

Residues 1 to 31 (MDIQMANNFTPPSATPQGNDCDLYAHHSTAR) lie on the Extracellular side of the membrane. A helical membrane pass occupies residues 32–57 (IVMPLHYSLVFIIGLVGNLLALVVIV). At 58 to 77 (QNRKKINSTTLYSTNLVISD) the chain is on the cytoplasmic side. A helical transmembrane segment spans residues 78 to 95 (ILFTTALPTRIAYYAMGF). Arg87 serves as a coordination point for 7alpha,25-dihydroxycholesterol. Residues 96 to 105 (DWRIGDALCR) are Extracellular-facing. Cys104 and Cys181 are joined by a disulfide. Residues 106–127 (ITALVFYINTYAGVNFMTCLSI) form a helical membrane-spanning segment. 7alpha,25-dihydroxycholesterol contacts are provided by Tyr112 and Tyr116. Residues 126–134 (SIDRFIAVV) are interaction with G proteins. Topologically, residues 128–149 (DRFIAVVHPLRYNKIKRIEHAK) are cytoplasmic. Residues 150-168 (GVCIFVWILVFAQTLPLLI) form a helical membrane-spanning segment. Residues 169-192 (NPMSKQEAERITCMEYPNFEETKS) lie on the Extracellular side of the membrane. The chain crosses the membrane as a helical span at residues 193–215 (LPWILLGACFIGYVLPLIIILIC). At 216–241 (YSQICCKLFRTAKQNPLTEKSGVNKK) the chain is on the cytoplasmic side. The helical transmembrane segment at 242–265 (ALNTIILIIVVFVLCFTPYHVAII) threads the bilayer. Tyr260 lines the 7alpha,25-dihydroxycholesterol pocket. Residues 266–287 (QHMIKKLRFSNFLECSQRHSFQ) are Extracellular-facing. A helical transmembrane segment spans residues 288 to 312 (ISLHFTVCLMNFNCCMDPFIYFFAC). Over 313 to 361 (KGYKRKVMRMLKRQVSVSISSAVKSAPEENSREMTETQMMIHSKSSNGK) the chain is Cytoplasmic. Ser328 is subject to Phosphoserine. Residues 340 to 361 (EENSREMTETQMMIHSKSSNGK) form a disordered region. The span at 348–361 (ETQMMIHSKSSNGK) shows a compositional bias: polar residues.

This sequence belongs to the G-protein coupled receptor 1 family. Homodimer and heterodimer. Heterodimerizes with CXCR5; leading to modulate the interaction between of CXCL13 and CXCR5. As to expression, expressed abundantly in lymphoid tissues such as spleen and lymph node, and in B- and T-lymphocytes. Also highly expressed in lung, heart and gastrointestinal tract, and weakly expressed in the urogenital system and brain. Expressed in astrocytes.

The protein localises to the cell membrane. Its function is as follows. G-protein coupled receptor expressed in lymphocytes that acts as a chemotactic receptor for B-cells, T-cells, splenic dendritic cells, monocytes/macrophages and astrocytes. Receptor for oxysterol 7-alpha,25-dihydroxycholesterol (7-alpha,25-OHC) and other related oxysterols. Mediates cell positioning and movement of a number of cells by binding the 7-alpha,25-OHC ligand that forms a chemotactic gradient. Binding of 7-alpha,25-OHC mediates the correct localization of B-cells during humoral immune responses. Guides B-cell movement along the B-cell zone-T-cell zone boundary and later to interfollicular and outer follicular regions. Its specific expression during B-cell maturation helps position B-cells appropriately for mounting T-dependent antibody responses. Collaborates with CXCR5 to mediate B-cell migration; probably by forming a heterodimer with CXCR5 that affects the interaction between of CXCL13 and CXCR5. Also acts as a chemotactic receptor for some T-cells upon binding to 7-alpha,25-OHC ligand. Promotes follicular helper T (Tfh) cells differentiation by positioning activated T-cells at the follicle-T-zone interface, promoting contact of newly activated CD4 T-cells with activated dendritic cells and exposing them to Tfh-cell-promoting inducible costimulator (ICOS) ligand. Expression in splenic dendritic cells is required for their homeostasis, localization and ability to induce B- and T-cell responses: GPR183 acts as a chemotactic receptor in dendritic cells that mediates the accumulation of CD4(+) dendritic cells in bridging channels. Regulates migration of astrocytes and is involved in communication between astrocytes and macrophages. Promotes osteoclast precursor migration to bone surfaces. Signals constitutively through G(i)-alpha, but not G(s)-alpha or G(q)-alpha. Signals constitutively also via MAPK1/3 (ERK1/2). This is G-protein coupled receptor 183 from Homo sapiens (Human).